Consider the following 38-residue polypeptide: Photosystem II reaction center protein L (38 aa).

The helical transmembrane segment at 17 to 37 (SLYWGLLLIFVLAVLFSSYIF) threads the bilayer.

The protein belongs to the PsbL family. In terms of assembly, PSII is composed of 1 copy each of membrane proteins PsbA, PsbB, PsbC, PsbD, PsbE, PsbF, PsbH, PsbI, PsbJ, PsbK, PsbL, PsbM, PsbT, PsbX, PsbY, PsbZ, Psb30/Ycf12, at least 3 peripheral proteins of the oxygen-evolving complex and a large number of cofactors. It forms dimeric complexes.

The protein resides in the plastid. It localises to the chloroplast thylakoid membrane. One of the components of the core complex of photosystem II (PSII). PSII is a light-driven water:plastoquinone oxidoreductase that uses light energy to abstract electrons from H(2)O, generating O(2) and a proton gradient subsequently used for ATP formation. It consists of a core antenna complex that captures photons, and an electron transfer chain that converts photonic excitation into a charge separation. This subunit is found at the monomer-monomer interface and is required for correct PSII assembly and/or dimerization. In Tupiella akineta (Green alga), this protein is Photosystem II reaction center protein L.